A 401-amino-acid chain; its full sequence is Mannan endo-1,4-beta-mannosidase 3 (401 aa).

Positions 1–24 (MSYTHRRSCISGLFLLLLALSCEA) are cleaved as a signal peptide. Substrate-binding residues include Trp-84 and Asn-198. Glu-199 serves as the catalytic Proton donor. Tyr-277 is a binding site for substrate. The active-site Nucleophile is the Glu-317. Residue Trp-356 coordinates substrate.

This sequence belongs to the glycosyl hydrolase 5 (cellulase A) family.

Its subcellular location is the secreted. It carries out the reaction Random hydrolysis of (1-&gt;4)-beta-D-mannosidic linkages in mannans, galactomannans and glucomannans.. The polypeptide is Mannan endo-1,4-beta-mannosidase 3 (MAN3) (Solanum lycopersicum (Tomato)).